The sequence spans 263 residues: Imidazole glycerol phosphate synthase subunit HisF (263 aa).

Catalysis depends on residues D22 and D141.

It belongs to the HisA/HisF family. Heterodimer of HisH and HisF.

Its subcellular location is the cytoplasm. The enzyme catalyses 5-[(5-phospho-1-deoxy-D-ribulos-1-ylimino)methylamino]-1-(5-phospho-beta-D-ribosyl)imidazole-4-carboxamide + L-glutamine = D-erythro-1-(imidazol-4-yl)glycerol 3-phosphate + 5-amino-1-(5-phospho-beta-D-ribosyl)imidazole-4-carboxamide + L-glutamate + H(+). Its pathway is amino-acid biosynthesis; L-histidine biosynthesis; L-histidine from 5-phospho-alpha-D-ribose 1-diphosphate: step 5/9. Its function is as follows. IGPS catalyzes the conversion of PRFAR and glutamine to IGP, AICAR and glutamate. The HisF subunit catalyzes the cyclization activity that produces IGP and AICAR from PRFAR using the ammonia provided by the HisH subunit. The sequence is that of Imidazole glycerol phosphate synthase subunit HisF from Clavibacter michiganensis subsp. michiganensis (strain NCPPB 382).